The sequence spans 2299 residues: Protein Ycf2 (2299 aa).

1642–1649 (GSIGTGRS) is a binding site for ATP.

Belongs to the Ycf2 family.

Its subcellular location is the plastid. It is found in the chloroplast stroma. Functionally, probable ATPase of unknown function. Its presence in a non-photosynthetic plant (Epifagus virginiana) and experiments in tobacco indicate that it has an essential function which is probably not related to photosynthesis. In Nandina domestica (Heavenly bamboo), this protein is Protein Ycf2.